Reading from the N-terminus, the 232-residue chain is Nucleolar protein 16 (232 aa).

Residues 1 to 14 (MGRELQKRKKRSSR) show a composition bias toward basic residues. 2 disordered regions span residues 1 to 20 (MGRE…VQTH) and 113 to 161 (RSDN…QSSR). Residues 132-154 (EEPKPKNPTHDIEWHGISDDRQE) show a composition bias toward basic and acidic residues.

Belongs to the NOP16 family. Component of the pre-66S ribosomal particle.

It localises to the nucleus. It is found in the nucleolus. In terms of biological role, involved in the biogenesis of the 60S ribosomal subunit. In Neurospora crassa (strain ATCC 24698 / 74-OR23-1A / CBS 708.71 / DSM 1257 / FGSC 987), this protein is Nucleolar protein 16 (nop-16).